A 375-amino-acid polypeptide reads, in one-letter code: DNA replication and repair protein RecF (375 aa).

30–37 is an ATP binding site; the sequence is GNNAQGKS.

The protein belongs to the RecF family.

The protein resides in the cytoplasm. In terms of biological role, the RecF protein is involved in DNA metabolism; it is required for DNA replication and normal SOS inducibility. RecF binds preferentially to single-stranded, linear DNA. It also seems to bind ATP. The protein is DNA replication and repair protein RecF of Microcystis aeruginosa (strain NIES-843 / IAM M-2473).